A 279-amino-acid polypeptide reads, in one-letter code: Glutamate racemase (279 aa).

Residues 13 to 14 (DS) and 45 to 46 (YG) each bind substrate. The Proton donor/acceptor role is filled by Cys76. 77-78 (NT) serves as a coordination point for substrate. Cys185 (proton donor/acceptor) is an active-site residue. 186 to 187 (TH) contacts substrate.

Belongs to the aspartate/glutamate racemases family.

The catalysed reaction is L-glutamate = D-glutamate. Its pathway is cell wall biogenesis; peptidoglycan biosynthesis. In terms of biological role, provides the (R)-glutamate required for cell wall biosynthesis. In Synechocystis sp. (strain ATCC 27184 / PCC 6803 / Kazusa), this protein is Glutamate racemase.